We begin with the raw amino-acid sequence, 353 residues long: Trans-enoyl reductase fsa3 (353 aa).

45 to 48 (VDTK) is an NADP(+) binding site. 131–138 (ISFMTTGL) lines the substrate pocket. NADP(+) contacts are provided by residues 166 to 169 (SSAT), 189 to 192 (SPRN), tyrosine 207, and 254 to 255 (LE). Residue 275–279 (GPQML) coordinates substrate. 344 to 345 (IS) lines the NADP(+) pocket.

It belongs to the zinc-containing alcohol dehydrogenase family. Monomer.

The catalysed reaction is L-serine + 7 malonyl-CoA + acetyl-CoA + 2 S-adenosyl-L-methionine + ATP + 8 NADPH + 11 H(+) = (5S)-3-[(2E,6R,8E,10E,12E)-2,6-dimethyltetradeca-2,8,10,12-tetraenoyl]-5-(hydroxymethyl)pyrrolidine-2,4-dione + AMP + 2 S-adenosyl-L-homocysteine + 7 CO2 + diphosphate + 8 NADP(+) + 8 CoA + 6 H2O. Its pathway is mycotoxin biosynthesis. In terms of biological role, trans-enoyl reductase; part of the gene cluster that mediates the biosynthesis of HIV-1 integrase inhibitor equisetin and of fusarisetin A, both trans-fused decalin-containing tetramic acids showing also antimicrobial activity. The PKS module of fsa1 together with the enoylreductase fsa3 catalyze the formation of the polyketide unit which is then conjugated to L-serine by the condensation domain of the fsa1 NRPS module. Activity of the Dieckmann cyclase domain (RED) results in release of the Dieckmann product intermediate. Diels-Alderase fsa2 is involved in endo-selective Diels-Alder cycloaddition to form the decalin ring, leading to the production of N-desmethylequisetin also called trichosetin. Subsequent N-methylation is carried out by fsa4 to give equisetin. The enzymatic gene responsible for the conversion of equisetin to fusarisetin A has not been identified yet and is probably located outside of the fsa cluster. This is Trans-enoyl reductase fsa3 from Fusarium sp. (strain FN080326).